The following is a 292-amino-acid chain: 33 kDa chaperonin (292 aa).

Cystine bridges form between cysteine 230/cysteine 232 and cysteine 263/cysteine 266.

This sequence belongs to the HSP33 family. Under oxidizing conditions two disulfide bonds are formed involving the reactive cysteines. Under reducing conditions zinc is bound to the reactive cysteines and the protein is inactive.

It localises to the cytoplasm. Functionally, redox regulated molecular chaperone. Protects both thermally unfolding and oxidatively damaged proteins from irreversible aggregation. Plays an important role in the bacterial defense system toward oxidative stress. The protein is 33 kDa chaperonin of Shigella boydii serotype 4 (strain Sb227).